Here is a 416-residue protein sequence, read N- to C-terminus: MNKQSWLLNLSLLKTHPAFRAVFLARFISIVSLGLLGVAVPVQIQMMTHSTWQVGLSVTLTGGAMFVGLMVGGVLADRYERKKVILLARGTCGIGFIGLCLNALLPEPSLLAIYLLGLWDGFFASLGVTALLAATPALVGRENLMQAGAITMLTVRLGSVISPMIGGLLLATGGVAWNYGLAAAGTFITLLPLLSLPALPPPPQPREHPLKSLLAGFRFLLASPLVGGIALLGGLLTMASAVRVLYPALADNWQMSAAQIGFLYAAIPLGAAIGALTSGKLAHSARPGLLMLLSTLGSFLAIGLFGLMPMWILGVICLALFGWLSAVSSLLQYTMLQTQTPEAMLGRINGLWTAQNVTGDAIGAALLGGLGAMMTPVASASASGFGLLIIGVLLLLVLVELRRFRQTPPQVTASDS.

Topologically, residues 1–21 (MNKQSWLLNLSLLKTHPAFRA) are cytoplasmic. A helical membrane pass occupies residues 22–42 (VFLARFISIVSLGLLGVAVPV). At 43–55 (QIQMMTHSTWQVG) the chain is on the periplasmic side. Residues 56-76 (LSVTLTGGAMFVGLMVGGVLA) traverse the membrane as a helical segment. Residues 77 to 83 (DRYERKK) are Cytoplasmic-facing. Residues 84–104 (VILLARGTCGIGFIGLCLNAL) form a helical membrane-spanning segment. The Periplasmic segment spans residues 105 to 109 (LPEPS). A helical transmembrane segment spans residues 110–130 (LLAIYLLGLWDGFFASLGVTA). Residues 131–156 (LLAATPALVGRENLMQAGAITMLTVR) lie on the Cytoplasmic side of the membrane. Residues 157–177 (LGSVISPMIGGLLLATGGVAW) traverse the membrane as a helical segment. N178 is a topological domain (periplasmic). Residues 179–199 (YGLAAAGTFITLLPLLSLPAL) traverse the membrane as a helical segment. At 200–218 (PPPPQPREHPLKSLLAGFR) the chain is on the cytoplasmic side. The helical transmembrane segment at 219-239 (FLLASPLVGGIALLGGLLTMA) threads the bilayer. The Periplasmic portion of the chain corresponds to 240-256 (SAVRVLYPALADNWQMS). The chain crosses the membrane as a helical span at residues 257–277 (AAQIGFLYAAIPLGAAIGALT). The Cytoplasmic portion of the chain corresponds to 278–287 (SGKLAHSARP). A helical membrane pass occupies residues 288–307 (GLLMLLSTLGSFLAIGLFGL). Residues 308–313 (MPMWIL) are Periplasmic-facing. A helical transmembrane segment spans residues 314 to 336 (GVICLALFGWLSAVSSLLQYTML). The Cytoplasmic segment spans residues 337 to 356 (QTQTPEAMLGRINGLWTAQN). Residues 357–377 (VTGDAIGAALLGGLGAMMTPV) traverse the membrane as a helical segment. A topological domain (periplasmic) is located at residue A378. A helical membrane pass occupies residues 379–399 (SASASGFGLLIIGVLLLLVLV). At 400-416 (ELRRFRQTPPQVTASDS) the chain is on the cytoplasmic side.

Belongs to the major facilitator superfamily. EntS (TC 2.A.1.38) family.

It localises to the cell inner membrane. Component of an export pathway for enterobactin. The polypeptide is Enterobactin exporter EntS (Escherichia coli O81 (strain ED1a)).